Reading from the N-terminus, the 187-residue chain is Large ribosomal subunit protein uL10 (187 aa).

Belongs to the universal ribosomal protein uL10 family. Part of the ribosomal stalk of the 50S ribosomal subunit. The N-terminus interacts with L11 and the large rRNA to form the base of the stalk. The C-terminus forms an elongated spine to which L12 dimers bind in a sequential fashion forming a multimeric L10(L12)X complex.

Forms part of the ribosomal stalk, playing a central role in the interaction of the ribosome with GTP-bound translation factors. The sequence is that of Large ribosomal subunit protein uL10 from Synechococcus sp. (strain JA-3-3Ab) (Cyanobacteria bacterium Yellowstone A-Prime).